The following is a 317-amino-acid chain: MKKFALLFIALVTAVVISACGNQSTSSKGSDTKKEQITVKHQLDKNGTKVPKNPKKVVVFDFGSLDTLDKLGLDDIVAGLPKQVLPKYLSKFKDDKYADVGSLKEPDFDKVAELDPDLIIISARQSESYKEFSKIAPTIYLGVDTAKYMESFKSDAETIGKIFDKEDKVKDELANIDHSIADVKKTAEKLNKNGLVIMANDGKISAFGPKSRYGLIHDVFGVAPADQNIKASTHGQSVSYEYISKTNPDYLFVIDRGTAIGETSSTKQVVENDYVKNVNAVKNGHVIYLDSATWYLSGGGLESMTQMIKEVKDGLEK.

The signal sequence occupies residues 1-19; that stretch reads MKKFALLFIALVTAVVISA. Cys-20 carries the N-palmitoyl cysteine lipid modification. Cys-20 is lipidated: S-diacylglycerol cysteine. Residues 56 to 317 enclose the Fe/B12 periplasmic-binding domain; it reads KVVVFDFGSL…IKEVKDGLEK (262 aa).

The protein belongs to the bacterial solute-binding protein 8 family. In terms of assembly, the complex is composed of two ATP-binding proteins (YclP), two transmembrane proteins (YclN and YclO) and a solute-binding protein (YclQ). Interacts with FloT.

It localises to the cell membrane. The protein resides in the membrane raft. In terms of biological role, part of the ABC transporter complex YclNOPQ involved in uptake of ferric-petrobactin. Petrobactin is a photoreactive 3,4-catecholate siderophore produced by many members of the B.cereus group, including B.anthracis. Binds selectively iron-free and ferric petrobactin and the petrobactin precursor 3,4-dihydroxybenzoic acid (3,4-DHB). In Bacillus subtilis (strain 168), this protein is Petrobactin-binding protein YclQ (yclQ).